The sequence spans 496 residues: Glycerol kinase (496 aa).

ADP is bound at residue Thr12. ATP-binding residues include Thr12, Thr13, and Ser14. Position 12 (Thr12) interacts with sn-glycerol 3-phosphate. Arg16 provides a ligand contact to ADP. Sn-glycerol 3-phosphate contacts are provided by Arg82, Glu83, and Tyr134. Glycerol-binding residues include Arg82, Glu83, and Tyr134. Phosphohistidine; by HPr is present on His230. Residue Asp244 coordinates sn-glycerol 3-phosphate. Asp244 and Gln245 together coordinate glycerol. ADP contacts are provided by Thr266 and Gly309. ATP-binding residues include Thr266, Gly309, Gln313, and Gly410. The ADP site is built by Gly410 and Asn414.

This sequence belongs to the FGGY kinase family. In terms of assembly, homotetramer and homodimer (in equilibrium). Post-translationally, the phosphoenolpyruvate-dependent sugar phosphotransferase system (PTS), including enzyme I, and histidine-containing protein (HPr) are required for the phosphorylation, which leads to the activation of the enzyme.

It catalyses the reaction glycerol + ATP = sn-glycerol 3-phosphate + ADP + H(+). It participates in polyol metabolism; glycerol degradation via glycerol kinase pathway; sn-glycerol 3-phosphate from glycerol: step 1/1. With respect to regulation, activated by phosphorylation and inhibited by fructose 1,6-bisphosphate (FBP). In terms of biological role, key enzyme in the regulation of glycerol uptake and metabolism. Catalyzes the phosphorylation of glycerol to yield sn-glycerol 3-phosphate. In Bacillus anthracis (strain A0248), this protein is Glycerol kinase.